The primary structure comprises 469 residues: MASPRELTQNPLKKIWMPYSNGRPALHASQRGVCMTNCPTLIVMVGLPARGKTYISKKLTRYLNWIGVPTREFNVGQYRRDMVKTYKSFEFFLPDNEEGLKIRKQCALAALNDVRKFLSEEGGHVAVFDATNTTRERRAMIFNFGEQNGYKTFFVESICVDPEVIAANIVQVKLGSPDYVNRDSDEATEDFMRRIECYENSYESLDEEQDRDLSYIKIMDVGQSYVVNRVADHIQSRIVYYLMNIHVTPRSIYLCRHGESELNLKGRIGGDPGLSPRGREFSKHLAQFISDQNIKDLKVWTSQMKRTIQTAEALSVPYEQWKVLNEIDAGVCEEMTYEEIQDHYPLEFALRDQDKYRYRYPKGESYEDLVQRLEPVIMELERQENVLVICHQAVMRCLLAYFLDKAAEELPYLKCPLHTVLKLTPVAYGCKVESIFLNVAAVNTHRDRPQNVDISRPSEEALVTVPAHQ.

The tract at residues 1–249 (MASPRELTQN…YYLMNIHVTP (249 aa)) is 6-phosphofructo-2-kinase. Ser-29 is modified (phosphoserine; by PKC). 46 to 54 (GLPARGKTY) lines the ATP pocket. Beta-D-fructose 6-phosphate contacts are provided by Arg-79 and Arg-103. Asp-129 is an active-site residue. 2 residues coordinate beta-D-fructose 6-phosphate: Thr-131 and Arg-137. Residue Cys-159 is part of the active site. 168–173 (NIVQVK) contacts ATP. Beta-D-fructose 6-phosphate-binding residues include Lys-173, Arg-194, and Tyr-198. The fructose-2,6-bisphosphatase stretch occupies residues 250-469 (RSIYLCRHGE…EALVTVPAHQ (220 aa)). Residue Arg-256 coordinates beta-D-fructose 2,6-bisphosphate. His-257 functions as the Tele-phosphohistidine intermediate in the catalytic mechanism. Residues Asn-263, Gly-269, and Arg-306 each coordinate beta-D-fructose 2,6-bisphosphate. Glu-326 acts as the Proton donor/acceptor in catalysis. Beta-D-fructose 2,6-bisphosphate contacts are provided by Tyr-337, Arg-351, Lys-355, Tyr-366, Gln-392, and Arg-396. Residue 348–351 (FALR) participates in ATP binding. ATP contacts are provided by residues 392–396 (QAVMR) and Tyr-428. Thr-444 is subject to Phosphothreonine; by PKC.

The protein in the C-terminal section; belongs to the phosphoglycerate mutase family. Homodimer. In terms of tissue distribution, testis.

The catalysed reaction is beta-D-fructose 2,6-bisphosphate + H2O = beta-D-fructose 6-phosphate + phosphate. It catalyses the reaction beta-D-fructose 6-phosphate + ATP = beta-D-fructose 2,6-bisphosphate + ADP + H(+). The most important regulatory mechanism of these opposing activities is by phosphorylation and dephosphorylation of the enzyme. Its function is as follows. Synthesis and degradation of fructose 2,6-bisphosphate. The polypeptide is 6-phosphofructo-2-kinase/fructose-2,6-bisphosphatase 4 (Pfkfb4) (Rattus norvegicus (Rat)).